Here is a 132-residue protein sequence, read N- to C-terminus: Small ribosomal subunit protein uS8 (132 aa).

The protein belongs to the universal ribosomal protein uS8 family. Part of the 30S ribosomal subunit. Contacts proteins S5 and S12.

One of the primary rRNA binding proteins, it binds directly to 16S rRNA central domain where it helps coordinate assembly of the platform of the 30S subunit. The protein is Small ribosomal subunit protein uS8 of Bacillus licheniformis (strain ATCC 14580 / DSM 13 / JCM 2505 / CCUG 7422 / NBRC 12200 / NCIMB 9375 / NCTC 10341 / NRRL NRS-1264 / Gibson 46).